Reading from the N-terminus, the 341-residue chain is MATIKDVAKRANVSTTTVSHVINKTRFVAEETRNAVWAAIKELHYSPSAVARSLKVNHTKSIGLLATSSEAAYFAEIIEAVEKNCFQKGYTLILGNAWNNLEKQRAYLSMMAQKRVDGLLVMCSEYPEPLLTMLEEYRHIPMVVMDWGEAKADFTDAVIDNAFEGGYMAGRYLIERGHRDIGVIPGPLERNTGAGRLAGFMKAMEEALIKVPENWIVQGDFEPESGYRAMQQILAQTHRPTAVFCGGDIMAMGALCAADEMGLRVPQDISVIGYDNVRNARYFTPALTTIHQPKDSLGETAFNMLLDRIVNKREEPQSIEVHPRLIERRSVADGPFRDYRR.

The HTH lacI-type domain occupies 2-56 (ATIKDVAKRANVSTTTVSHVINKTRFVAEETRNAVWAAIKELHYSPSAVARSLKV). A DNA-binding region (H-T-H motif) is located at residues 4-23 (IKDVAKRANVSTTTVSHVIN). The DNA-binding element occupies 48-56 (SAVARSLKV). Residues Tyr-73, Arg-190, Thr-192, Phe-221, and Asp-275 each contribute to the hypoxanthine site.

As to quaternary structure, homodimer.

Its pathway is purine metabolism; purine nucleotide biosynthesis [regulation]. Its function is as follows. Is the main repressor of the genes involved in the de novo synthesis of purine nucleotides, regulating purB, purC, purEK, purF, purHD, purL, purMN and guaBA expression. PurR is allosterically activated to bind its cognate DNA by binding the purine corepressors, hypoxanthine or guanine, thereby effecting transcription repression. The protein is HTH-type transcriptional repressor PurR of Escherichia fergusonii (strain ATCC 35469 / DSM 13698 / CCUG 18766 / IAM 14443 / JCM 21226 / LMG 7866 / NBRC 102419 / NCTC 12128 / CDC 0568-73).